Consider the following 261-residue polypeptide: Enolase-phosphatase E1 (261 aa).

Mg(2+) is bound by residues Asp16 and Glu18. Substrate contacts are provided by residues 153–154 and Lys187; that span reads SS. Asp212 is a binding site for Mg(2+).

The protein belongs to the HAD-like hydrolase superfamily. MasA/MtnC family. As to quaternary structure, monomer. It depends on Mg(2+) as a cofactor.

The protein resides in the cytoplasm. It is found in the nucleus. The catalysed reaction is 5-methylsulfanyl-2,3-dioxopentyl phosphate + H2O = 1,2-dihydroxy-5-(methylsulfanyl)pent-1-en-3-one + phosphate. It participates in amino-acid biosynthesis; L-methionine biosynthesis via salvage pathway; L-methionine from S-methyl-5-thio-alpha-D-ribose 1-phosphate: step 3/6. The protein operates within amino-acid biosynthesis; L-methionine biosynthesis via salvage pathway; L-methionine from S-methyl-5-thio-alpha-D-ribose 1-phosphate: step 4/6. Functionally, bifunctional enzyme that catalyzes the enolization of 2,3-diketo-5-methylthiopentyl-1-phosphate (DK-MTP-1-P) into the intermediate 2-hydroxy-3-keto-5-methylthiopentenyl-1-phosphate (HK-MTPenyl-1-P), which is then dephosphorylated to form the acireductone 1,2-dihydroxy-3-keto-5-methylthiopentene (DHK-MTPene). This Bos taurus (Bovine) protein is Enolase-phosphatase E1.